Consider the following 475-residue polypeptide: MSEAIFQPTDIVLAKVKGFSAWPAMIIPNELIPDNILKTKPVSVHKGKSGSDKKANEDIDADMESEARDREQSEEEEDIEDFGESEANPEKFIIYTPVLKFRKNDTLKSTYCVKFFCDDSYIWVKPMDMKILTSEDCRKWLSGKQRKNKKLIPAYEMAMRGKNGIDIWEFVEYGSYGKPDEEEYVEEEEEENEPEKKAIRPTRSSSRQRQKRASETEKSEGGNSNKRKRVTRSTRQQAIDASEEEEEEEEEKVQEAVRKRPQRTKTKKVVVSKTKPNPKTKAKKEKPKPPKPIKYHFEDDEDWSIVGLGPQDLSIEKTMDPIAKKLSQKKNLEKHVEIKLDLEDKLAGINKLLCDVLCSAINQAVSIKDDFEIILDELQIALDTRGSRNEFITIFQSNNSLLLNFRILFNLRKRELNKWDLWDRFQDIFKHIYSYQFIPDTEDWQLEQNMEIEEMDREKPSFSEDVKEEESKVGA.

Phosphoserine is present on Ser2. Position 9 is a phosphothreonine (Thr9). 3 disordered regions span residues 42 to 84 (VSVH…DFGE), 181 to 296 (EEEY…IKYH), and 454 to 475 (EMDREKPSFSEDVKEEESKVGA). Phosphoserine is present on residues Ser65 and Ser73. 3 stretches are compositionally biased toward acidic residues: residues 72-84 (QSEEEEDIEDFGE), 181-193 (EEEYVEEEEEENE), and 241-252 (ASEEEEEEEEEK). Ser242 bears the Phosphoserine mark. A compositionally biased stretch (basic residues) spans 259–294 (KRPQRTKTKKVVVSKTKPNPKTKAKKEKPKPPKPIK). Residues 456–475 (DREKPSFSEDVKEEESKVGA) show a composition bias toward basic and acidic residues.

Component of the ISW1B complex, which at least consists of ISW1, IOC2 and IOC4.

It is found in the nucleus. In terms of biological role, functions as a component of the ISW1B complex, which acts in remodeling the chromatin by catalyzing an ATP-dependent alteration in the structure of nucleosomal DNA. The ISW1B complex acts within coding regions to control the amount of RNA polymerase II released into productive elongation and to coordinate elongation with termination and pre-mRNA processing. This chain is ISWI one complex protein 4 (IOC4), found in Saccharomyces cerevisiae (strain ATCC 204508 / S288c) (Baker's yeast).